A 248-amino-acid chain; its full sequence is DNA-directed RNA polymerase subunit Rpo3 (248 aa).

It belongs to the archaeal Rpo3/eukaryotic RPB3 RNA polymerase subunit family. In terms of assembly, part of the RNA polymerase complex.

It localises to the cytoplasm. It catalyses the reaction RNA(n) + a ribonucleoside 5'-triphosphate = RNA(n+1) + diphosphate. In terms of biological role, DNA-dependent RNA polymerase (RNAP) catalyzes the transcription of DNA into RNA using the four ribonucleoside triphosphates as substrates. This is DNA-directed RNA polymerase subunit Rpo3 from Halobacterium salinarum (strain ATCC 29341 / DSM 671 / R1).